The following is a 391-amino-acid chain: Pepsin B (391 aa).

The first 16 residues, Met-1–Gly-16, serve as a signal peptide directing secretion. A propeptide spans Leu-17 to Asp-60 (activation peptide). Residues Tyr-75 to Ala-388 enclose the Peptidase A1 domain. Residue Asp-93 is part of the active site. Disulfide bonds link Cys-106–Cys-111 and Cys-270–Cys-274. The active site involves Asp-279. Cys-313 and Cys-346 are oxidised to a cystine.

It belongs to the peptidase A1 family.

Its subcellular location is the secreted. The enzyme catalyses Degradation of gelatin, little activity on hemoglobin. Specificity on B chain of insulin more restricted than that of pepsin A. Does not cleave 1-Phe-|-Val-2, 4-Gln-|-His-5 or 23-Gly-|-Phe-24.. Its function is as follows. Hydrolyzes various peptides including beta-endorphin, insulin B chain, dynorphin A, and neurokinin A, with high specificity for the cleavage of the Phe-Xaa bonds. This Monodelphis domestica (Gray short-tailed opossum) protein is Pepsin B.